The sequence spans 438 residues: Serine hydroxymethyltransferase (438 aa).

(6S)-5,6,7,8-tetrahydrofolate contacts are provided by residues L119 and 123-125 (GHL). K228 is modified (N6-(pyridoxal phosphate)lysine). 370–372 (SPF) serves as a coordination point for (6S)-5,6,7,8-tetrahydrofolate.

This sequence belongs to the SHMT family. As to quaternary structure, homodimer. The cofactor is pyridoxal 5'-phosphate.

It localises to the cytoplasm. It carries out the reaction (6R)-5,10-methylene-5,6,7,8-tetrahydrofolate + glycine + H2O = (6S)-5,6,7,8-tetrahydrofolate + L-serine. It functions in the pathway one-carbon metabolism; tetrahydrofolate interconversion. It participates in amino-acid biosynthesis; glycine biosynthesis; glycine from L-serine: step 1/1. Catalyzes the reversible interconversion of serine and glycine with tetrahydrofolate (THF) serving as the one-carbon carrier. This reaction serves as the major source of one-carbon groups required for the biosynthesis of purines, thymidylate, methionine, and other important biomolecules. Also exhibits THF-independent aldolase activity toward beta-hydroxyamino acids, producing glycine and aldehydes, via a retro-aldol mechanism. In Pelodictyon phaeoclathratiforme (strain DSM 5477 / BU-1), this protein is Serine hydroxymethyltransferase.